The primary structure comprises 252 residues: uncharacterized protein (252 aa).

The helical transmembrane segment at 80 to 100 threads the bilayer; that stretch reads LSVLVIGSTMFTHAGVLPVLA.

The protein resides in the host membrane. It localises to the virion. This is an uncharacterized protein from Acanthamoeba polyphaga mimivirus (APMV).